Consider the following 875-residue polypeptide: Protein translocase subunit SecA (875 aa).

Residues glutamine 87, 105 to 109 (GEGKT), and aspartate 512 contribute to the ATP site. Zn(2+) is bound by residues cysteine 860, cysteine 862, cysteine 871, and histidine 872.

Belongs to the SecA family. In terms of assembly, monomer and homodimer. Part of the essential Sec protein translocation apparatus which comprises SecA, SecYEG and auxiliary proteins SecDF-YajC and YidC. It depends on Zn(2+) as a cofactor.

It localises to the cell inner membrane. The protein localises to the cytoplasm. It carries out the reaction ATP + H2O + cellular proteinSide 1 = ADP + phosphate + cellular proteinSide 2.. Part of the Sec protein translocase complex. Interacts with the SecYEG preprotein conducting channel. Has a central role in coupling the hydrolysis of ATP to the transfer of proteins into and across the cell membrane, serving both as a receptor for the preprotein-SecB complex and as an ATP-driven molecular motor driving the stepwise translocation of polypeptide chains across the membrane. This is Protein translocase subunit SecA from Buchnera aphidicola subsp. Acyrthosiphon pisum (strain APS) (Acyrthosiphon pisum symbiotic bacterium).